The chain runs to 156 residues: Endoribonuclease YbeY (156 aa).

Zn(2+)-binding residues include His122, His126, and His132.

It belongs to the endoribonuclease YbeY family. Zn(2+) is required as a cofactor.

It localises to the cytoplasm. Functionally, single strand-specific metallo-endoribonuclease involved in late-stage 70S ribosome quality control and in maturation of the 3' terminus of the 16S rRNA. This is Endoribonuclease YbeY from Bacillus mycoides (strain KBAB4) (Bacillus weihenstephanensis).